Reading from the N-terminus, the 37-residue chain is Large ribosomal subunit protein bL36 (37 aa).

Belongs to the bacterial ribosomal protein bL36 family.

The sequence is that of Large ribosomal subunit protein bL36 from Nitratidesulfovibrio vulgaris (strain ATCC 29579 / DSM 644 / CCUG 34227 / NCIMB 8303 / VKM B-1760 / Hildenborough) (Desulfovibrio vulgaris).